Here is a 302-residue protein sequence, read N- to C-terminus: Deoxyhypusine hydroxylase-B (302 aa).

5 HEAT-like PBS-type repeats span residues 49-75 (LAHE…VLKD), 82-108 (VRHE…SLAV), 171-200 (MYER…LGVK), 204-230 (LRHE…VLKN), and 237-263 (VRHE…FAKD). Residues His-51, Glu-52, His-84, and Glu-85 each coordinate Fe cation. 4 residues coordinate Fe cation: His-206, Glu-207, His-239, and Glu-240.

Belongs to the deoxyhypusine hydroxylase family. It depends on Fe(2+) as a cofactor.

The enzyme catalyses [eIF5A protein]-deoxyhypusine + AH2 + O2 = [eIF5A protein]-hypusine + A + H2O. It participates in protein modification; eIF5A hypusination. Its function is as follows. Catalyzes the hydroxylation of the N(6)-(4-aminobutyl)-L-lysine intermediate to form hypusine, an essential post-translational modification only found in mature eIF-5A factor. The sequence is that of Deoxyhypusine hydroxylase-B from Oryza sativa subsp. japonica (Rice).